We begin with the raw amino-acid sequence, 298 residues long: Protoheme IX farnesyltransferase (298 aa).

9 helical membrane passes run 24-44, 49-69, 100-120, 121-141, 149-169, 175-195, 220-240, 244-264, and 277-297; these read VIQL…PGLP, LQLA…AAAF, LLFS…WVNP, LTMW…TVIL, IVIG…AMAG, ALIL…ALAL, LMVL…YVYG, WLYL…AFYL, and FRFS…DHYL.

The protein belongs to the UbiA prenyltransferase family. Protoheme IX farnesyltransferase subfamily.

The protein localises to the cell inner membrane. It catalyses the reaction heme b + (2E,6E)-farnesyl diphosphate + H2O = Fe(II)-heme o + diphosphate. The protein operates within porphyrin-containing compound metabolism; heme O biosynthesis; heme O from protoheme: step 1/1. Converts heme B (protoheme IX) to heme O by substitution of the vinyl group on carbon 2 of heme B porphyrin ring with a hydroxyethyl farnesyl side group. The chain is Protoheme IX farnesyltransferase from Albidiferax ferrireducens (strain ATCC BAA-621 / DSM 15236 / T118) (Rhodoferax ferrireducens).